Reading from the N-terminus, the 128-residue chain is Mini-ribonuclease 3 (128 aa).

Asp17 is an active-site residue.

It belongs to the MrnC RNase family. As to quaternary structure, homodimer. Requires Mg(2+) as cofactor.

The protein resides in the cytoplasm. In terms of biological role, involved in correct processing of both the 5' and 3' ends of 23S rRNA precursor. Processes 30S rRNA precursor transcript even in absence of ribonuclease 3 (Rnc); Rnc processes 30S rRNA into smaller rRNA precursors. This is Mini-ribonuclease 3 from Streptococcus pneumoniae (strain ATCC BAA-255 / R6).